A 557-amino-acid polypeptide reads, in one-letter code: Dihydroxy-acid dehydratase (557 aa).

Cys-49 is a [2Fe-2S] cluster binding site. Position 81 (Asp-81) interacts with Mg(2+). Cys-122 serves as a coordination point for [2Fe-2S] cluster. 2 residues coordinate Mg(2+): Asp-123 and Lys-124. The residue at position 124 (Lys-124) is an N6-carboxylysine. Cys-194 is a binding site for [2Fe-2S] cluster. Residue Glu-446 participates in Mg(2+) binding. Ser-472 acts as the Proton acceptor in catalysis.

Belongs to the IlvD/Edd family. In terms of assembly, homodimer. It depends on [2Fe-2S] cluster as a cofactor. Requires Mg(2+) as cofactor.

The catalysed reaction is (2R)-2,3-dihydroxy-3-methylbutanoate = 3-methyl-2-oxobutanoate + H2O. The enzyme catalyses (2R,3R)-2,3-dihydroxy-3-methylpentanoate = (S)-3-methyl-2-oxopentanoate + H2O. Its pathway is amino-acid biosynthesis; L-isoleucine biosynthesis; L-isoleucine from 2-oxobutanoate: step 3/4. It participates in amino-acid biosynthesis; L-valine biosynthesis; L-valine from pyruvate: step 3/4. In terms of biological role, functions in the biosynthesis of branched-chain amino acids. Catalyzes the dehydration of (2R,3R)-2,3-dihydroxy-3-methylpentanoate (2,3-dihydroxy-3-methylvalerate) into 2-oxo-3-methylpentanoate (2-oxo-3-methylvalerate) and of (2R)-2,3-dihydroxy-3-methylbutanoate (2,3-dihydroxyisovalerate) into 2-oxo-3-methylbutanoate (2-oxoisovalerate), the penultimate precursor to L-isoleucine and L-valine, respectively. This Prochlorococcus marinus (strain MIT 9215) protein is Dihydroxy-acid dehydratase.